The following is a 123-amino-acid chain: MKTVFFLLLATYLALHPGAALQCYSCTAQMNNRDCLNVQNCSLDQHSCFTSRIRAIGLVTVISKGCSSQCEDDSENYYLGKKNITCCYSDLCNVNGAHTLKPPTTLGLLTVLCSLLLWGSSRL.

An N-terminal signal peptide occupies residues 1 to 20; the sequence is MKTVFFLLLATYLALHPGAA. In terms of domain architecture, UPAR/Ly6 spans 21–95; the sequence is LQCYSCTAQM…CCYSDLCNVN (75 aa). Intrachain disulfides connect Cys-23–Cys-48, Cys-26–Cys-35, Cys-41–Cys-66, Cys-70–Cys-86, and Cys-87–Cys-92. An N-linked (GlcNAc...) asparagine glycan is attached at Asn-40. Residue Asn-95 is the site of GPI-anchor amidated asparagine attachment. The propeptide at 96 to 123 is removed in mature form; the sequence is GAHTLKPPTTLGLLTVLCSLLLWGSSRL.

In terms of assembly, interacts with CHRNA4. In terms of tissue distribution, predominantly expressed in prostate. Also found in spleen, liver, lung, prostate, kidney and testis. Expressed in brain cortex; expression is increased in transgenic mouse model of Alzheimer disease (at protein level).

The protein resides in the cell membrane. In terms of biological role, may be involved in the regulation of cell proliferation. May act as a modulator of nicotinic acetylcholine receptors (nAChRs) activity. In vitro inhibits nicotine-induced signaling probably implicating alpha-3:beta-2- or alpha-7-containing nAChRs. The polypeptide is Prostate stem cell antigen (Psca) (Mus musculus (Mouse)).